A 401-amino-acid chain; its full sequence is Dual-specificity RNA methyltransferase RlmN (401 aa).

Glu114 functions as the Proton acceptor in the catalytic mechanism. Positions 120–365 (DKGRGTLCVS…TMVRRTRGDD (246 aa)) constitute a Radical SAM core domain. An intrachain disulfide couples Cys127 to Cys370. [4Fe-4S] cluster-binding residues include Cys134, Cys138, and Cys141. S-adenosyl-L-methionine-binding positions include 187–188 (GE), Ser219, 241–243 (SLH), and Asn327. The active-site S-methylcysteine intermediate is the Cys370.

It belongs to the radical SAM superfamily. RlmN family. The cofactor is [4Fe-4S] cluster.

Its subcellular location is the cytoplasm. The enzyme catalyses adenosine(2503) in 23S rRNA + 2 reduced [2Fe-2S]-[ferredoxin] + 2 S-adenosyl-L-methionine = 2-methyladenosine(2503) in 23S rRNA + 5'-deoxyadenosine + L-methionine + 2 oxidized [2Fe-2S]-[ferredoxin] + S-adenosyl-L-homocysteine. It catalyses the reaction adenosine(37) in tRNA + 2 reduced [2Fe-2S]-[ferredoxin] + 2 S-adenosyl-L-methionine = 2-methyladenosine(37) in tRNA + 5'-deoxyadenosine + L-methionine + 2 oxidized [2Fe-2S]-[ferredoxin] + S-adenosyl-L-homocysteine. Its function is as follows. Specifically methylates position 2 of adenine 2503 in 23S rRNA and position 2 of adenine 37 in tRNAs. m2A2503 modification seems to play a crucial role in the proofreading step occurring at the peptidyl transferase center and thus would serve to optimize ribosomal fidelity. This chain is Dual-specificity RNA methyltransferase RlmN, found in Xanthomonas campestris pv. campestris (strain B100).